Consider the following 363-residue polypeptide: UDP-N-acetylglucosamine--N-acetylmuramyl-(pentapeptide) pyrophosphoryl-undecaprenol N-acetylglucosamine transferase (363 aa).

UDP-N-acetyl-alpha-D-glucosamine is bound by residues 13–15, Asn125, Arg166, Ser195, Ile249, 268–273, and Gln294; these read TGG and ALTVSE.

This sequence belongs to the glycosyltransferase 28 family. MurG subfamily.

Its subcellular location is the cell inner membrane. It catalyses the reaction di-trans,octa-cis-undecaprenyl diphospho-N-acetyl-alpha-D-muramoyl-L-alanyl-D-glutamyl-meso-2,6-diaminopimeloyl-D-alanyl-D-alanine + UDP-N-acetyl-alpha-D-glucosamine = di-trans,octa-cis-undecaprenyl diphospho-[N-acetyl-alpha-D-glucosaminyl-(1-&gt;4)]-N-acetyl-alpha-D-muramoyl-L-alanyl-D-glutamyl-meso-2,6-diaminopimeloyl-D-alanyl-D-alanine + UDP + H(+). It functions in the pathway cell wall biogenesis; peptidoglycan biosynthesis. Its function is as follows. Cell wall formation. Catalyzes the transfer of a GlcNAc subunit on undecaprenyl-pyrophosphoryl-MurNAc-pentapeptide (lipid intermediate I) to form undecaprenyl-pyrophosphoryl-MurNAc-(pentapeptide)GlcNAc (lipid intermediate II). This Cellvibrio japonicus (strain Ueda107) (Pseudomonas fluorescens subsp. cellulosa) protein is UDP-N-acetylglucosamine--N-acetylmuramyl-(pentapeptide) pyrophosphoryl-undecaprenol N-acetylglucosamine transferase.